The chain runs to 236 residues: Peptidase E (236 aa).

Residues serine 122, aspartate 137, and histidine 159 each act as charge relay system in the active site.

Belongs to the peptidase S51 family.

It localises to the cytoplasm. It carries out the reaction Dipeptidase E catalyzes the hydrolysis of dipeptides Asp-|-Xaa. It does not act on peptides with N-terminal Glu, Asn or Gln, nor does it cleave isoaspartyl peptides.. Its function is as follows. Hydrolyzes dipeptides containing N-terminal aspartate residues. May play a role in allowing the cell to use peptide aspartate to spare carbon otherwise required for the synthesis of the aspartate family of amino acids. The protein is Peptidase E of Shewanella sp. (strain W3-18-1).